The sequence spans 258 residues: UPF0758 protein Bcep1808_2579 (258 aa).

An MPN domain is found at 136 to 258 (PIDSPGAVED…TFSFARAGWL (123 aa)). His-207, His-209, and Asp-220 together coordinate Zn(2+). The short motif at 207–220 (HNHPSGAVQPSAED) is the JAMM motif element.

The protein belongs to the UPF0758 family.

This chain is UPF0758 protein Bcep1808_2579, found in Burkholderia vietnamiensis (strain G4 / LMG 22486) (Burkholderia cepacia (strain R1808)).